The primary structure comprises 192 residues: Fibroblast growth factor 4B (192 aa).

Positions 1–22 (MTVQLALVPILLLGTAAVMVHC) are cleaved as a signal peptide.

This sequence belongs to the heparin-binding growth factors family.

It localises to the secreted. Its function is as follows. Plays an important role in the regulation of embryonic development, cell proliferation, and cell differentiation. Good candidate for an inducing factor with possible roles both in mesoderm induction at the blastula stage and in the formation of the anteroposterior axis at the gastrula stage. The protein is Fibroblast growth factor 4B (fgf4-b) of Xenopus laevis (African clawed frog).